The primary structure comprises 540 residues: Chaperonin GroEL 1 (540 aa).

ATP-binding positions include T29 to P32, D86 to T90, G415, N479 to A481, and D495.

The protein belongs to the chaperonin (HSP60) family. Forms a cylinder of 14 subunits composed of two heptameric rings stacked back-to-back. Interacts with the co-chaperonin GroES.

The protein localises to the cytoplasm. It catalyses the reaction ATP + H2O + a folded polypeptide = ADP + phosphate + an unfolded polypeptide.. Its function is as follows. Together with its co-chaperonin GroES, plays an essential role in assisting protein folding. The GroEL-GroES system forms a nano-cage that allows encapsulation of the non-native substrate proteins and provides a physical environment optimized to promote and accelerate protein folding. In Streptomyces albus G, this protein is Chaperonin GroEL 1.